The primary structure comprises 179 residues: Large ribosomal subunit protein uL6 (179 aa).

This sequence belongs to the universal ribosomal protein uL6 family. Part of the 50S ribosomal subunit.

Its function is as follows. This protein binds to the 23S rRNA, and is important in its secondary structure. It is located near the subunit interface in the base of the L7/L12 stalk, and near the tRNA binding site of the peptidyltransferase center. The protein is Large ribosomal subunit protein uL6 of Mycolicibacterium vanbaalenii (strain DSM 7251 / JCM 13017 / BCRC 16820 / KCTC 9966 / NRRL B-24157 / PYR-1) (Mycobacterium vanbaalenii).